Reading from the N-terminus, the 528-residue chain is tRNA-2-methylthio-N(6)-dimethylallyladenosine synthase (528 aa).

The MTTase N-terminal domain maps to R19–H134. [4Fe-4S] cluster contacts are provided by C28, C63, C97, C171, C175, and C178. The Radical SAM core domain maps to R157 to E387. The region spanning Q390–D460 is the TRAM domain.

It belongs to the methylthiotransferase family. MiaB subfamily. Monomer. The cofactor is [4Fe-4S] cluster.

The protein localises to the cytoplasm. It catalyses the reaction N(6)-dimethylallyladenosine(37) in tRNA + (sulfur carrier)-SH + AH2 + 2 S-adenosyl-L-methionine = 2-methylsulfanyl-N(6)-dimethylallyladenosine(37) in tRNA + (sulfur carrier)-H + 5'-deoxyadenosine + L-methionine + A + S-adenosyl-L-homocysteine + 2 H(+). Its function is as follows. Catalyzes the methylthiolation of N6-(dimethylallyl)adenosine (i(6)A), leading to the formation of 2-methylthio-N6-(dimethylallyl)adenosine (ms(2)i(6)A) at position 37 in tRNAs that read codons beginning with uridine. This chain is tRNA-2-methylthio-N(6)-dimethylallyladenosine synthase, found in Clavibacter michiganensis subsp. michiganensis (strain NCPPB 382).